The following is a 127-amino-acid chain: Photosystem II reaction center Psb28 protein (127 aa).

Residues 108–127 (LGYSQSQDSDQTEGADNQQA) form a disordered region. Polar residues predominate over residues 109–127 (GYSQSQDSDQTEGADNQQA).

It belongs to the Psb28 family. In terms of assembly, part of the photosystem II complex.

The protein localises to the cellular thylakoid membrane. The polypeptide is Photosystem II reaction center Psb28 protein (Synechococcus sp. (strain CC9605)).